The primary structure comprises 310 residues: Proline-rich 28 kDa antigen (310 aa).

An N-terminal signal peptide occupies residues 1 to 32 (MIQIARTWRVFAGGMATGFIGVVLVTAGKASA). The disordered stretch occupies residues 278–310 (QAPAPAPGSAPVGLPGQAPGYPPAGTLTPVPPR).

The protein to M.leprae ML0031.

The sequence is that of Proline-rich 28 kDa antigen (mtc28) from Mycobacterium bovis (strain ATCC BAA-935 / AF2122/97).